Consider the following 431-residue polypeptide: Gamma-glutamyl phosphate reductase (431 aa).

This sequence belongs to the gamma-glutamyl phosphate reductase family.

It localises to the cytoplasm. It catalyses the reaction L-glutamate 5-semialdehyde + phosphate + NADP(+) = L-glutamyl 5-phosphate + NADPH + H(+). It participates in amino-acid biosynthesis; L-proline biosynthesis; L-glutamate 5-semialdehyde from L-glutamate: step 2/2. Functionally, catalyzes the NADPH-dependent reduction of L-glutamate 5-phosphate into L-glutamate 5-semialdehyde and phosphate. The product spontaneously undergoes cyclization to form 1-pyrroline-5-carboxylate. In Methylobacterium nodulans (strain LMG 21967 / CNCM I-2342 / ORS 2060), this protein is Gamma-glutamyl phosphate reductase.